The following is a 989-amino-acid chain: E3 ubiquitin-protein ligase Arkadia (989 aa).

Residues lysine 19, lysine 33, lysine 46, lysine 58, lysine 72, lysine 86, lysine 95, and lysine 109 each participate in a glycyl lysine isopeptide (Lys-Gly) (interchain with G-Cter in SUMO2) cross-link. The interval 63–195 (FSHLCDDSQK…TEADPVPSLL (133 aa)) is disordered. The span at 65–88 (HLCDDSQKQEKDMTGNQQEQEKSG) shows a compositional bias: basic and acidic residues. Polar residues predominate over residues 97-109 (QQAGPSYVQNCVK). Residues 110-120 (ENQEILGRRQQ) are compositionally biased toward basic and acidic residues. Positions 131–144 (SSLSECLSSPSSSL) are enriched in low complexity. Lysine 172 is covalently cross-linked (Glycyl lysine isopeptide (Lys-Gly) (interchain with G-Cter in SUMO2)). The span at 173 to 183 (SRSHSARSHKW) shows a compositional bias: basic residues. Residues lysine 197 and lysine 217 each participate in a glycyl lysine isopeptide (Lys-Gly) (interchain with G-Cter in SUMO2) cross-link. Positions 213 to 293 (KRLVKSSSSQ…PSNPAAPSGS (81 aa)) are disordered. The interval 240 to 402 (ALAQRKYALL…VPTTSARMDS (163 aa)) is interaction with AXIN1. Low complexity-rich tracts occupy residues 248 to 270 (LLSS…SSST) and 278 to 291 (ASAS…AAPS). Residues 298-302 (VVVIE) carry the SUMO interaction motif 1 (SIM) motif. Residues 323–329 (EVEIVTV) carry the SUMO interaction motif 2 (SIM) motif. Residues 335 to 367 (SRSTLGHSRSHWSQGSSSHTGRPQESRNRSRIS) are disordered. Residues 345 to 355 (HWSQGSSSHTG) are compositionally biased toward low complexity. Positions 380-384 (VVDLT) match the SUMO interaction motif 3 (SIM) motif. Disordered regions lie at residues 388 to 475 (DEPT…MPRL), 506 to 559 (HGHH…YHDQ), and 641 to 675 (MPPP…PPPQ). Positions 393-451 (VPTTSARMDSQTTSASINNSNPSTSEQASDTTSTVASSQPSTVSETEATLTSNSATGSS) are enriched in polar residues. Positions 506 to 520 (HGHHFQHHHHHHHTP) are enriched in basic residues. Over residues 548–558 (ANSSSGSSYHD) the composition is skewed to polar residues. The interval 902 to 904 (YPH) is ubiquitin binding. Glycyl lysine isopeptide (Lys-Gly) (interchain with G-Cter in SUMO2) cross-links involve residues lysine 918 and lysine 922. Zn(2+)-binding residues include cysteine 937 and cysteine 940. An RING-type; atypical zinc finger spans residues 937–978 (CTICLSILEEGEDVRRLPCMHLFHQVCVDQWLITNKKCPICR). The ubiquitin binding stretch occupies residues 952-956 (RLPCM). The Zn(2+) site is built by histidine 960 and cysteine 963.

It belongs to the Arkadia family. As to quaternary structure, monomer. Interacts with SMAD6, SMAD7, AXIN1, AXIN2 and SKIL isoform SNON. Interacts with (phosphorylated) SMAD2 and SMAD3. Part of a complex containing RNF111, AXIN1 and SMAD7. Interacts (via SIM domains) with SUMO1 and SUMO2. Ubiquitously expressed.

It is found in the nucleus. Its subcellular location is the cytoplasm. The protein resides in the PML body. It carries out the reaction S-ubiquitinyl-[E2 ubiquitin-conjugating enzyme]-L-cysteine + [acceptor protein]-L-lysine = [E2 ubiquitin-conjugating enzyme]-L-cysteine + N(6)-ubiquitinyl-[acceptor protein]-L-lysine.. It participates in protein modification; protein ubiquitination. Its activity is regulated as follows. Binds free ubiquitin non-covalently via its RING-type zinc finger. Ubiquitin-binding leads to enhance the E3 ubiquitin-protein ligase activity by stabilizing the ubiquitin-conjugating enzyme E2 (donor ubiquitin) in the 'closed' conformation and activating ubiquitin transfer. Functionally, E3 ubiquitin-protein ligase required for mesoderm patterning during embryonic development. Acts as an enhancer of the transcriptional responses of the SMAD2/SMAD3 effectors, which are activated downstream of BMP. Acts by mediating ubiquitination and degradation of SMAD inhibitors such as SMAD7, inducing their proteasomal degradation and thereby enhancing the transcriptional activity of TGF-beta and BMP. In addition to enhance transcription of SMAD2/SMAD3 effectors, also regulates their turnover by mediating their ubiquitination and subsequent degradation, coupling their activation with degradation, thereby ensuring that only effectors 'in use' are degraded. Activates SMAD3/SMAD4-dependent transcription by triggering signal-induced degradation of SNON isoform of SKIL. Associates with UBE2D2 as an E2 enzyme. Specifically binds polysumoylated chains via SUMO interaction motifs (SIMs) and mediates ubiquitination of sumoylated substrates. Catalyzes 'Lys-63'-linked ubiquitination of sumoylated XPC in response to UV irradiation, promoting nucleotide excision repair. Mediates ubiquitination and degradation of sumoylated PML. The regulation of the BMP-SMAD signaling is however independent of sumoylation and is not dependent of SUMO interaction motifs (SIMs). The polypeptide is E3 ubiquitin-protein ligase Arkadia (Mus musculus (Mouse)).